A 530-amino-acid polypeptide reads, in one-letter code: Bifunctional purine biosynthesis protein PurH (530 aa).

Residues 1–148 enclose the MGS-like domain; that stretch reads MNNPRPIRRA…KNHKDVTIVV (148 aa).

The protein belongs to the PurH family.

It catalyses the reaction (6R)-10-formyltetrahydrofolate + 5-amino-1-(5-phospho-beta-D-ribosyl)imidazole-4-carboxamide = 5-formamido-1-(5-phospho-D-ribosyl)imidazole-4-carboxamide + (6S)-5,6,7,8-tetrahydrofolate. It carries out the reaction IMP + H2O = 5-formamido-1-(5-phospho-D-ribosyl)imidazole-4-carboxamide. Its pathway is purine metabolism; IMP biosynthesis via de novo pathway; 5-formamido-1-(5-phospho-D-ribosyl)imidazole-4-carboxamide from 5-amino-1-(5-phospho-D-ribosyl)imidazole-4-carboxamide (10-formyl THF route): step 1/1. The protein operates within purine metabolism; IMP biosynthesis via de novo pathway; IMP from 5-formamido-1-(5-phospho-D-ribosyl)imidazole-4-carboxamide: step 1/1. The sequence is that of Bifunctional purine biosynthesis protein PurH from Aliivibrio salmonicida (strain LFI1238) (Vibrio salmonicida (strain LFI1238)).